The sequence spans 578 residues: Octopamine receptor 2 (578 aa).

Over 1–84 (MMSFPIALFA…YDSITIFITV (84 aa)) the chain is Extracellular. N-linked (GlcNAc...) asparagine glycans are attached at residues asparagine 13, asparagine 38, asparagine 46, and asparagine 59. Residues 85-107 (AVVLTLITLWTILGNFFVLMALY) traverse the membrane as a helical segment. Residues 108–117 (RYGTLRTMSN) are Cytoplasmic-facing. The chain crosses the membrane as a helical span at residues 118-139 (CLIGNLAISDLLLAVTVLPIST). Over 140 to 156 (VHDLLGYWVFGEFTCTL) the chain is Extracellular. A disulfide bridge connects residues cysteine 154 and cysteine 239. Residues 157 to 177 (WLCMDVLYCTASIWGLCTVAF) form a helical membrane-spanning segment. Over 178 to 197 (DRYLATVYPVWYHDQRSVRK) the chain is Cytoplasmic. Residues 198-220 (AVGCIVFVWIFSIVISFAPFIGW) traverse the membrane as a helical segment. Residues 221 to 251 (QHMIPSFFSFNASIQRYQCILFTSSSYVLYS) lie on the Extracellular side of the membrane. Asparagine 231 carries an N-linked (GlcNAc...) asparagine glycan. Residues 252–272 (SMGSFVIPAILMAFMYVRIFV) form a helical membrane-spanning segment. The Cytoplasmic portion of the chain corresponds to 273 to 495 (VLHNQSRGVK…ELREQRATKR (223 aa)). The helical transmembrane segment at 496 to 517 (MLLIMACFCVCWMPFLFMYILR) threads the bilayer. Over 518-531 (SVCDTCHMNQHFVA) the chain is Extracellular. A helical transmembrane segment spans residues 532–553 (AIIWLGYVNSSLNPVLYTLFND). At 554–578 (DFKVAFKRLIGARSPSAYRSPGPRR) the chain is on the cytoplasmic side.

Belongs to the G-protein coupled receptor 1 family.

It is found in the cell membrane. Its function is as follows. Receptor for octopamine. Octopamine (OA) is a neurotransmitter, neurohormone, and neuromodulator in invertebrates. This receptor induces a long lasting opening of voltage- independent chloride channels, a process which seems to involve protein phosphorylation but does not require either cAPK or PKC. The rank order of potency for agonists is p-synephrine &gt; p-octopamine &gt; xylometazoline &gt; B-HT920 &gt; norepinephrine = clonidine &gt; epinephrine &gt; p-tyramine &gt; phenylephrine = oxymetazoline = mehoxamine = dopamine &gt; serotonin &gt; histamine. For antagonists, the rank order is rauwolscine = mianserin &gt; phentolamine &gt; chlorpromazine &gt; spiperone &gt; yohimbine &gt; propanolol &gt; alprenolol &gt; prazosine &gt; pindolol. This chain is Octopamine receptor 2, found in Lymnaea stagnalis (Great pond snail).